The sequence spans 340 residues: Replication initiation protein (340 aa).

The tract at residues 38-58 is disordered; it reads PERKRTKRRRGEHSTKPKCEN.

The chain is Replication initiation protein (repA1) from Escherichia coli.